A 354-amino-acid polypeptide reads, in one-letter code: 3-dehydroquinate synthase (354 aa).

NAD(+) contacts are provided by residues 61-66, 119-120, K132, K141, and 159-162; these read DGESTK, TT, and FLET. 3 residues coordinate Zn(2+): E174, H238, and H254.

Belongs to the sugar phosphate cyclases superfamily. Dehydroquinate synthase family. NAD(+) is required as a cofactor. Co(2+) serves as cofactor. The cofactor is Zn(2+).

The protein localises to the cytoplasm. The catalysed reaction is 7-phospho-2-dehydro-3-deoxy-D-arabino-heptonate = 3-dehydroquinate + phosphate. The protein operates within metabolic intermediate biosynthesis; chorismate biosynthesis; chorismate from D-erythrose 4-phosphate and phosphoenolpyruvate: step 2/7. In terms of biological role, catalyzes the conversion of 3-deoxy-D-arabino-heptulosonate 7-phosphate (DAHP) to dehydroquinate (DHQ). This chain is 3-dehydroquinate synthase, found in Saccharolobus solfataricus (strain ATCC 35092 / DSM 1617 / JCM 11322 / P2) (Sulfolobus solfataricus).